The primary structure comprises 574 residues: Probable E3 ubiquitin-protein ligase ipaH4.5 (574 aa).

Positions 1–284 (MKPINNHSFF…YHGPQIYFSM (284 aa)) are interaction with target proteins. LRR repeat units follow at residues 63–82 (REPV…PLPL), 83–104 (HIRE…SPLL), 105–122 (TELH…TLPS), 123–143 (QLIK…SLPP), 144–165 (YLQS…PSTL), 166–183 (TILR…ELPH), 184–205 (RLQE…PQSL), 206–223 (KYLK…RLPQ), 224–246 (ELLA…ITLP), and 247–270 (ICTN…QRLT). Residues 285–292 (SDGQQNTL) are linker. Residues 293 to 574 (HRPLADAVTA…YRQLTDEVLA (282 aa)) form an E3 ubiquitin-protein ligase catalytic domain region. Positions 295–574 (PLADAVTAWF…YRQLTDEVLA (280 aa)) constitute an NEL domain. Cys-379 (glycyl thioester intermediate) is an active-site residue.

The protein belongs to the LRR-containing bacterial E3 ligase family. Ubiquitinated in the presence of host E1 ubiquitin-activating enzyme, E2 ubiquitin-conjugating enzyme and ubiquitin.

Its subcellular location is the secreted. The protein localises to the host cytoplasm. The catalysed reaction is S-ubiquitinyl-[E2 ubiquitin-conjugating enzyme]-L-cysteine + [acceptor protein]-L-lysine = [E2 ubiquitin-conjugating enzyme]-L-cysteine + N(6)-ubiquitinyl-[acceptor protein]-L-lysine.. Its function is as follows. Effector proteins function to alter host cell physiology and promote bacterial survival in host tissues. This protein is an E3 ubiquitin ligase that interferes with host's ubiquitination pathway. This is Probable E3 ubiquitin-protein ligase ipaH4.5 (ipaH4.5) from Shigella flexneri.